The following is a 510-amino-acid chain: Probable cytosol aminopeptidase (510 aa).

The Mn(2+) site is built by Lys254 and Asp259. Lys266 is a catalytic residue. Residues Asp277, Asp336, and Glu338 each coordinate Mn(2+). Residue Arg340 is part of the active site. A disordered region spans residues 487-510 (AQPVKASPKTRPARKSTPAAKTRA).

It belongs to the peptidase M17 family. The cofactor is Mn(2+).

The protein resides in the cytoplasm. The enzyme catalyses Release of an N-terminal amino acid, Xaa-|-Yaa-, in which Xaa is preferably Leu, but may be other amino acids including Pro although not Arg or Lys, and Yaa may be Pro. Amino acid amides and methyl esters are also readily hydrolyzed, but rates on arylamides are exceedingly low.. The catalysed reaction is Release of an N-terminal amino acid, preferentially leucine, but not glutamic or aspartic acids.. In terms of biological role, presumably involved in the processing and regular turnover of intracellular proteins. Catalyzes the removal of unsubstituted N-terminal amino acids from various peptides. This chain is Probable cytosol aminopeptidase, found in Polaromonas naphthalenivorans (strain CJ2).